A 61-amino-acid polypeptide reads, in one-letter code: Probable tautomerase SAV1363 (61 aa).

The Proton acceptor; via imino nitrogen role is filled by Pro-2.

This sequence belongs to the 4-oxalocrotonate tautomerase family.

The sequence is that of Probable tautomerase SAV1363 from Staphylococcus aureus (strain Mu50 / ATCC 700699).